A 426-amino-acid polypeptide reads, in one-letter code: MKYLIKAKIEVEGLVDRHDIIGAIFGQTENLFGEEFDLRKLQDRGRIGRVQVDIKHEGTRTIGEVVVPSNLDRVETALVAAMLESVEKVGPYKAQIRVYDIVDVRAQKIKRIVERAKEILRIWSLEKTPDLREVLREISEAVKRAEVIEYGPERLPAGPDVDKSDEIIIVEGRADVINLLRYGYRNVIALEGARGKIPETIIKLAKTKKAIAFVDGDHGGDLILWELLKVADIDYVAKAPPGKEVEELTGKEIARALRNLIPAREYLQILERKFKPKPAVEERPQPPQPQPPAVQPVQPTLQPTVTTVEVVREAKPEKPTVQVEVETFEIPPSVIEEVKKLSGTLEAVLYDSKWNPIERVSVRDVYNVLEKMEPGKVYAVAYDGIVTQRMLDIAAEKQVRLLIANRIGNIEKRPPKVGILTFSDLT.

One can recognise a Toprim domain in the interval 165–241 (DEIIIVEGRA…DIDYVAKAPP (77 aa)). Mg(2+) contacts are provided by Glu171, Asp215, and Asp217. The tract at residues 278 to 298 (PAVEERPQPPQPQPPAVQPVQ) is disordered. Over residues 285 to 294 (QPPQPQPPAV) the composition is skewed to pro residues.

It belongs to the archaeal DnaG primase family. In terms of assembly, forms a ternary complex with MCM helicase and DNA. Component of the archaeal exosome complex. Mg(2+) serves as cofactor.

It carries out the reaction ssDNA + n NTP = ssDNA/pppN(pN)n-1 hybrid + (n-1) diphosphate.. RNA polymerase that catalyzes the synthesis of short RNA molecules used as primers for DNA polymerase during DNA replication. Also part of the exosome, which is a complex involved in RNA degradation. Acts as a poly(A)-binding protein that enhances the interaction between heteromeric, adenine-rich transcripts and the exosome. The polypeptide is DNA primase DnaG (Hyperthermus butylicus (strain DSM 5456 / JCM 9403 / PLM1-5)).